Here is a 129-residue protein sequence, read N- to C-terminus: Transcription antitermination protein NusB (129 aa).

This sequence belongs to the NusB family.

Involved in transcription antitermination. Required for transcription of ribosomal RNA (rRNA) genes. Binds specifically to the boxA antiterminator sequence of the ribosomal RNA (rrn) operons. This Staphylococcus epidermidis (strain ATCC 35984 / DSM 28319 / BCRC 17069 / CCUG 31568 / BM 3577 / RP62A) protein is Transcription antitermination protein NusB.